The chain runs to 74 residues: Ferredoxin MycCII (74 aa).

The 4Fe-4S ferredoxin-type domain occupies 1–29; that stretch reads MRIVLDAERCVGAGQCEATAPELFTQGDD. [3Fe-4S] cluster-binding residues include cysteine 10, cysteine 16, and cysteine 54.

It depends on [3Fe-4S] cluster as a cofactor.

The protein operates within antibiotic biosynthesis; mycinamicin biosynthesis. Specific electron transport protein capable of effectively supporting cytochrome P450 MycCI activity in the biosynthesis of mycinamicin, a 16-membered macrolide antibiotic. In Micromonospora griseorubida, this protein is Ferredoxin MycCII.